A 257-amino-acid polypeptide reads, in one-letter code: Succinate dehydrogenase subunit 5, mitochondrial (257 aa).

The N-terminal 89 residues, 1–89 (MGTLGRAIHT…AMGMGQVRRF (89 aa)), are a transit peptide targeting the mitochondrion.

Component of complex II composed of eight subunits in plants: four classical SDH subunits SDH1, SDH2, SDH3 and SDH4 (a flavoprotein (FP), an iron-sulfur protein (IP), and a cytochrome b composed of a large and a small subunit.), as well as four subunits unknown in mitochondria from bacteria and heterotrophic eukaryotes.

Its subcellular location is the mitochondrion inner membrane. The protein operates within carbohydrate metabolism; tricarboxylic acid cycle. This chain is Succinate dehydrogenase subunit 5, mitochondrial, found in Arabidopsis thaliana (Mouse-ear cress).